Here is a 253-residue protein sequence, read N- to C-terminus: Ubiquinone/menaquinone biosynthesis C-methyltransferase UbiE (253 aa).

Residues T76, D97, 125–126 (NA), and S142 each bind S-adenosyl-L-methionine.

The protein belongs to the class I-like SAM-binding methyltransferase superfamily. MenG/UbiE family.

The catalysed reaction is a 2-demethylmenaquinol + S-adenosyl-L-methionine = a menaquinol + S-adenosyl-L-homocysteine + H(+). It catalyses the reaction a 2-methoxy-6-(all-trans-polyprenyl)benzene-1,4-diol + S-adenosyl-L-methionine = a 5-methoxy-2-methyl-3-(all-trans-polyprenyl)benzene-1,4-diol + S-adenosyl-L-homocysteine + H(+). It functions in the pathway quinol/quinone metabolism; menaquinone biosynthesis; menaquinol from 1,4-dihydroxy-2-naphthoate: step 2/2. It participates in cofactor biosynthesis; ubiquinone biosynthesis. Its function is as follows. Methyltransferase required for the conversion of demethylmenaquinol (DMKH2) to menaquinol (MKH2) and the conversion of 2-polyprenyl-6-methoxy-1,4-benzoquinol (DDMQH2) to 2-polyprenyl-3-methyl-6-methoxy-1,4-benzoquinol (DMQH2). The protein is Ubiquinone/menaquinone biosynthesis C-methyltransferase UbiE of Xanthomonas oryzae pv. oryzae (strain MAFF 311018).